The chain runs to 539 residues: Cytochrome P450 monooxygenase buaD (539 aa).

Positions 1 to 16 (MLVPVLTLLGTLTATG) are cleaved as a signal peptide. N-linked (GlcNAc...) asparagine glycosylation occurs at Asn-120. Residue Cys-478 coordinates heme. N-linked (GlcNAc...) asparagine glycosylation is present at Asn-520.

The protein belongs to the cytochrome P450 family. The cofactor is heme.

The protein operates within mycotoxin biosynthesis. Functionally, cytochrome P450 monooxygenase; part of the gene cluster that mediates the biosynthesis of burnettramic acids, an unusual class of bolaamphiphilic pyrrolizidinediones that display potent antibacterial, antifungal, and cytotoxic activities. The first step of the biosynthesis of burnettramic acids is the hydroxylation of proline by the proline hydroxylase buaE to generate 4-hydroxyproline. The PKS-NRPS buaA and trans-enoyl reductase buaC construct the highly reduced polyketide chain, and the condensation (C) domain of buaA then catalyzes the amide bond formation with the activated 4-hydroxyproline. This is followed by the R domain releasing the nascent polyketide-peptide directly via a Dieckmann condensation to afford a tetramic acid fused to the hydroxyproline, generating the bicyclic pyrrolidinedione moiety. The cytochrome P450 monooxygenases buaD and buaG are likely responsible for the multiple hydroxylations on the polyketide chain and its terminus, although in the heterologous context, buaD does not appear to be required. Therefore, while buaG may be a multifunctional cytochrome P450 monooxygenase, it cannot be ruled out that the two secondary alcohols on the polyketide chain could have an acetate origin. Finally, the glycosyltransferase buaB transfers beta-D-mannose to the aglycone burnettramic acid A to form burnettramic acid A. Burnettramic acid B is a minor cis-pyrrolizidine epimer of burnettramic acid A and it is likely that small amounts of it form naturally in acidic environments. This chain is Cytochrome P450 monooxygenase buaD, found in Petromyces alliaceus (Aspergillus alliaceus).